A 185-amino-acid chain; its full sequence is Acireductone dioxygenase (185 aa).

His-96, His-98, Glu-102, and His-140 together coordinate Fe(2+). Residues His-96, His-98, Glu-102, and His-140 each coordinate Ni(2+).

It belongs to the acireductone dioxygenase (ARD) family. As to quaternary structure, monomer. Fe(2+) is required as a cofactor. Requires Ni(2+) as cofactor.

It catalyses the reaction 1,2-dihydroxy-5-(methylsulfanyl)pent-1-en-3-one + O2 = 3-(methylsulfanyl)propanoate + CO + formate + 2 H(+). The enzyme catalyses 1,2-dihydroxy-5-(methylsulfanyl)pent-1-en-3-one + O2 = 4-methylsulfanyl-2-oxobutanoate + formate + 2 H(+). The protein operates within amino-acid biosynthesis; L-methionine biosynthesis via salvage pathway; L-methionine from S-methyl-5-thio-alpha-D-ribose 1-phosphate: step 5/6. In terms of biological role, catalyzes 2 different reactions between oxygen and the acireductone 1,2-dihydroxy-3-keto-5-methylthiopentene (DHK-MTPene) depending upon the metal bound in the active site. Fe-containing acireductone dioxygenase (Fe-ARD) produces formate and 2-keto-4-methylthiobutyrate (KMTB), the alpha-ketoacid precursor of methionine in the methionine recycle pathway. Ni-containing acireductone dioxygenase (Ni-ARD) produces methylthiopropionate, carbon monoxide and formate, and does not lie on the methionine recycle pathway. The protein is Acireductone dioxygenase of Marinobacter nauticus (strain ATCC 700491 / DSM 11845 / VT8) (Marinobacter aquaeolei).